The chain runs to 456 residues: Enolase (456 aa).

Gln-167 is a (2R)-2-phosphoglycerate binding site. Glu-209 acts as the Proton donor in catalysis. Asp-250, Glu-312, and Asp-339 together coordinate Mg(2+). (2R)-2-phosphoglycerate-binding residues include Lys-364, Arg-393, Ser-394, and Lys-415. The active-site Proton acceptor is Lys-364.

It belongs to the enolase family. Requires Mg(2+) as cofactor.

It localises to the cytoplasm. The protein resides in the secreted. It is found in the cell surface. It carries out the reaction (2R)-2-phosphoglycerate = phosphoenolpyruvate + H2O. It functions in the pathway carbohydrate degradation; glycolysis; pyruvate from D-glyceraldehyde 3-phosphate: step 4/5. Catalyzes the reversible conversion of 2-phosphoglycerate (2-PG) into phosphoenolpyruvate (PEP). It is essential for the degradation of carbohydrates via glycolysis. This chain is Enolase, found in Mycoplasmopsis pulmonis (strain UAB CTIP) (Mycoplasma pulmonis).